Here is a 482-residue protein sequence, read N- to C-terminus: Cytochrome c-552 (482 aa).

The N-terminal stretch at 1–26 (MIKVSNALQRILIGAALALFGGGAQA) is a signal peptide. His-98 contacts heme c. Residues Cys-126, Cys-129, and Lys-130 each coordinate heme. The heme c site is built by Cys-164, Cys-167, His-168, Cys-213, Cys-216, and His-217. The Ca(2+) site is built by Glu-219, Tyr-220, Lys-265, and Gln-267. Tyr-220 is a binding site for substrate. Position 268 (His-268) interacts with substrate. His-279, Cys-286, Cys-289, His-290, His-305, Cys-318, Cys-321, His-322, and His-397 together coordinate heme c.

The protein belongs to the cytochrome c-552 family. The cofactor is Ca(2+). It depends on heme c as a cofactor.

The protein resides in the periplasm. It carries out the reaction 6 Fe(III)-[cytochrome c] + NH4(+) + 2 H2O = 6 Fe(II)-[cytochrome c] + nitrite + 8 H(+). Its pathway is nitrogen metabolism; nitrate reduction (assimilation). Its function is as follows. Catalyzes the reduction of nitrite to ammonia, consuming six electrons in the process. The protein is Cytochrome c-552 of Edwardsiella ictaluri (strain 93-146).